The primary structure comprises 332 residues: MAQNLPTIALLATGGTIAGSGVDASLGSYKSGELGVKELLKAIPSLNKIARIQGEQVSNIGSQDMNEEIWFKLAQRAQELLDDSRIQGVVITHGTDTLEESAYFLNLVLHSTKPVVLVGAMRNASSLSADGALNLYYAVSVAVNEKSANKGVLVVMDDTIFRVREVVKTHTTHISTFKALNSGAIGSVYYGKTRYYMQPLRKHTTESEFSLSQLKTPLPKVDIIYTHAGMTPDLFQASLNSHAKGVVIAGVGNGNVSAGFLKAMQEASQMGVVIVRSSRVGSGGVTSGEIDDKAYGFITSDNLNPQKARVLLQLALTKTNDKAKIQEMFEEY.

An Asparaginase/glutaminase domain is found at 6 to 332 (PTIALLATGG…AKIQEMFEEY (327 aa)). The active-site O-isoaspartyl threonine intermediate is the T16. Residues S62 and 95 to 96 (TD) contribute to the substrate site.

This sequence belongs to the asparaginase 1 family.

It localises to the cytoplasm. It catalyses the reaction L-asparagine + H2O = L-aspartate + NH4(+). This is Probable L-asparaginase (ansA) from Helicobacter pylori (strain J99 / ATCC 700824) (Campylobacter pylori J99).